The sequence spans 502 residues: N-fatty-acyl-amino acid synthase/hydrolase PM20D1 (502 aa).

The N-terminal stretch at 1-25 (MAQRCVCVLALVAMLLLVFPTVSRS) is a signal peptide. Position 125 (histidine 125) interacts with Zn(2+). The active site involves aspartate 127. Residue aspartate 157 participates in Zn(2+) binding. Residue glutamate 191 is the Proton acceptor of the active site. Zn(2+) contacts are provided by glutamate 192 and aspartate 217. Asparagine 252 is a glycosylation site (N-linked (GlcNAc...) asparagine). Residue histidine 464 coordinates Zn(2+).

It belongs to the peptidase M20A family. Zn(2+) serves as cofactor.

It is found in the secreted. It carries out the reaction an N-acyl-L-amino acid + H2O = an L-alpha-amino acid + a carboxylate. The catalysed reaction is an N-acyl-aromatic L-alpha-amino acid + H2O = an aromatic L-alpha-amino acid + a carboxylate. It catalyses the reaction L-phenylalanine + (9Z)-octadecenoate = N-(9Z-octadecenoyl)-L-phenylalanine + H2O. The enzyme catalyses N-(9Z-octadecenoyl)-L-leucine + H2O = L-leucine + (9Z)-octadecenoate. It carries out the reaction N-(5Z,8Z,11Z,14Z)-eicosatetraenoyl-glycine + H2O = (5Z,8Z,11Z,14Z)-eicosatetraenoate + glycine. The catalysed reaction is N-hexadecanoyl-L-phenylalanine + H2O = hexadecanoate + L-phenylalanine. It catalyses the reaction N-octadecanoyl-L-phenylalanine + H2O = octadecanoate + L-phenylalanine. The enzyme catalyses N-(4Z,7Z,10Z,13Z,16Z,19Z-docosahexaenoyl)-L-phenylalanine + H2O = (4Z,7Z,10Z,13Z,16Z,19Z)-docosahexaenoate + L-phenylalanine. It carries out the reaction N-(9Z-octadecenoyl)-L-asparagine + H2O = L-asparagine + (9Z)-octadecenoate. The catalysed reaction is (9Z)-octadecenoate + glycine = N-(9Z-octadecenoyl)glycine + H2O. It catalyses the reaction N-(9Z-octadecenoyl)-L-lysine + H2O = L-lysine + (9Z)-octadecenoate. The enzyme catalyses N-(9Z-octadecenoyl)-L-methionine + H2O = (9Z)-octadecenoate + L-methionine. It carries out the reaction N-(9Z-octadecenoyl)-L-serine + H2O = L-serine + (9Z)-octadecenoate. The catalysed reaction is N-(9Z-octadecenoyl)-L-tryptophan + H2O = L-tryptophan + (9Z)-octadecenoate. It catalyses the reaction N-(9Z-octadecenoyl)-L-tyrosine + H2O = L-tyrosine + (9Z)-octadecenoate. The enzyme catalyses N-(9Z-octadecenoyl)-L-glutamine + H2O = L-glutamine + (9Z)-octadecenoate. It carries out the reaction N-(5Z,8Z,11Z,14Z-eicosatetraenoyl)-L-serine + H2O = (5Z,8Z,11Z,14Z)-eicosatetraenoate + L-serine. The catalysed reaction is (5Z,8Z,11Z,14Z)-eicosatetraenoate + L-phenylalanine = N-(5Z,8Z,11Z,14Z-eicosatetraenoyl)-L-phenylalanine + H2O. It functions in the pathway amino-acid metabolism. The protein operates within energy metabolism. It participates in lipid metabolism; fatty acid metabolism. With respect to regulation, lipoproteins are powerful coactivators of PM20D1 activity in vitro and NAA biosynthesis in vivo. Secreted enzyme that regulates the endogenous N-fatty acyl amino acid (NAAs) tissue and circulating levels by functioning as a bidirectional NAA synthase/hydrolase. It condenses free fatty acids and free amino acids to generate NAAs and bidirectionally catalyzes the reverse hydrolysis reaction. Some of these NAAs stimulate oxidative metabolism via mitochondrial uncoupling, increasing energy expenditure in a UPC1-independent manner. Thereby, this secreted protein may indirectly regulate whole body energy expenditure. PM20D1 circulates in tight association with both low- and high-density (LDL and HDL,respectively) lipoprotein particles. This Homo sapiens (Human) protein is N-fatty-acyl-amino acid synthase/hydrolase PM20D1.